A 202-amino-acid polypeptide reads, in one-letter code: Ribosome maturation factor RimP (202 aa).

The protein belongs to the RimP family.

Its subcellular location is the cytoplasm. In terms of biological role, required for maturation of 30S ribosomal subunits. The protein is Ribosome maturation factor RimP of Polaromonas naphthalenivorans (strain CJ2).